The chain runs to 649 residues: Quinol oxidase subunit 1 (649 aa).

The Extracellular segment spans residues 1–15 (MKFKWDEFFVTGDPL). A helical transmembrane segment spans residues 16–34 (ILGAQVSIALSTIAIIFVL). The Cytoplasmic portion of the chain corresponds to 35-56 (TYFKKWKWLWSEWITTVDHKKL). Residues 57-75 (GIMYIISAVIMLFRGGVDG) form a helical membrane-spanning segment. Over 76–97 (LMMRAQLALPNNSFLDSNHYNE) the chain is Extracellular. Residues 98 to 117 (IFTTHGTIMIIFMAMPFLIG) form a helical membrane-spanning segment. Fe(II)-heme a is bound at residue His102. The Cytoplasmic portion of the chain corresponds to 118–139 (LINVVVPLQIGARDVAFPYLNN). The helical transmembrane segment at 140-157 (LSFWTFFVGAMLFNISFV) threads the bilayer. Residues 158–190 (IGGSPNAGWTSYMPLASNDMSPGPGENYYLLGL) lie on the Extracellular side of the membrane. Residues 191–209 (QIAGIGTLMTGINFMVTIL) form a helical membrane-spanning segment. The Cytoplasmic portion of the chain corresponds to 210 to 227 (KMRTKGMTLMRMPMFTWT). A helical membrane pass occupies residues 228–246 (TLITMVIIVFAFPVLTVAL). The Extracellular segment spans residues 247–272 (ALLSFDRLFGAHFFTLEAGGMPMLWA). Residues 273–292 (NLFWIWGHPEVYIVILPAFG) traverse the membrane as a helical segment. 2 residues coordinate Cu cation: His280 and Tyr284. The 1'-histidyl-3'-tyrosine (His-Tyr) cross-link spans 280-284 (HPEVY). The Cytoplasmic portion of the chain corresponds to 293 to 315 (IFSEIISSFARKQLFGYKAMVGS). Residues 316–335 (IIAISVLSFLVWTHHFFTMG) traverse the membrane as a helical segment. Residues His329 and His330 each coordinate Cu cation. The Extracellular portion of the chain corresponds to 336–343 (NSASVNSF). The helical transmembrane segment at 344-362 (FSITTMAISIPTGVKIFNW) threads the bilayer. The Cytoplasmic segment spans residues 363 to 377 (LFTMYKGRISFTTPM). Residues 378–397 (LWALAFIPNFVIGGVTGVML) traverse the membrane as a helical segment. Over 398–405 (AMAAADYQ) the chain is Extracellular. The helical transmembrane segment at 406–425 (YHNTYFLVSHFHYVLIAGTV) threads the bilayer. His415 contributes to the heme a3 binding site. His417 lines the Fe(II)-heme a pocket. The Cytoplasmic segment spans residues 426-452 (FACFAGFIFWYPKMFGHKLNERIGKWF). Residues 453-472 (FWIFMIGFNICFFPQYFLGL) traverse the membrane as a helical segment. Topologically, residues 473–490 (QGMPRRIYTYGPNDGWTT) are extracellular. The helical transmembrane segment at 491 to 510 (LNFISTVGAFMMGVGFLILC) threads the bilayer. At 511–584 (YNIYYSFRYS…SKFKKIHMPS (74 aa)) the chain is on the cytoplasmic side. Residues 585 to 604 (NSGRPFFMSVAFGLAGFGLV) form a helical membrane-spanning segment. The Extracellular portion of the chain corresponds to 605 to 610 (FEWYWM). Residues 611-631 (GVVGLIGVLLCMVLRSFEYDN) form a helical membrane-spanning segment. At 632 to 649 (GYYISVDEIKETERKISE) the chain is on the cytoplasmic side.

Belongs to the heme-copper respiratory oxidase family. Cu cation serves as cofactor. The cofactor is ferriheme a. It depends on Heme A3. as a cofactor.

Its subcellular location is the cell membrane. The enzyme catalyses 2 a quinol + O2 = 2 a quinone + 2 H2O. Its pathway is energy metabolism; oxidative phosphorylation. Catalyzes quinol oxidation with the concomitant reduction of oxygen to water. Major component for energy conversion during vegetative growth. This is Quinol oxidase subunit 1 (qoxB) from Bacillus subtilis (strain 168).